Reading from the N-terminus, the 312-residue chain is Dehydrin CAS31 (312 aa).

Disordered regions lie at residues 1-88 (MSQY…HTGG) and 248-287 (GTEQNTYGTGTGTGHGTTGYGSTGTGHGTTGYGDEQHHGE). A compositionally biased stretch (polar residues) spans 21–30 (PLTSQGQVDQ). Positions 35-46 (ISGGGMTGATGH) are enriched in gly residues. The segment covering 55 to 66 (HGVGVDQTTGFG) has biased composition (low complexity). 2 stretches are compositionally biased toward gly residues: residues 67-88 (SNTGTGTGYGTHTGSGGTHTGG) and 256-278 (TGTGTGHGTTGYGSTGTGHGTTG).

This sequence belongs to the plant dehydrin family. Interacts with the leghemoglobin LB120-1 in the cytoplasm; this interaction leads to LB120-1 protection from denaturation under thermal and drought stresses. In terms of tissue distribution, expressed in nodules and roots.

The protein localises to the cytoplasm. Its function is as follows. Intrinsically disordered protein acting as a chaperone. Ensures leghemoglobins (e.g. LB120-1) protection from denaturation under thermal and drought stresses to delay root nodule nitrogenase inactivation and subsequent nodule senescence, thus supporting symbiotic nitrogen fixation (SNF). The sequence is that of Dehydrin CAS31 from Medicago truncatula (Barrel medic).